We begin with the raw amino-acid sequence, 1851 residues long: Chitin synthase (1851 aa).

The disordered stretch occupies residues 1–21 (MQYHQHQHQFPGPGPSHTSVY). The Cytoplasmic segment spans residues 1 to 108 (MQYHQHQHQF…KDTLYNGFLQ (108 aa)). The helical transmembrane segment at 109–129 (VLKMITFVALFVTTLGSSILA) threads the bilayer. Topologically, residues 130-168 (KLSLLVMAAGLGQAGHNISICPDKIPESPKNSVLISPKN) are extracellular. Asn146 carries an N-linked (GlcNAc...) asparagine glycan. Residues 169–189 (AAKWAWALLLAICIPELLCFA) traverse the membrane as a helical segment. Residues 190–208 (RSLHRSLFRKVRGPSFLQF) lie on the Cytoplasmic side of the membrane. The helical transmembrane segment at 209 to 229 (LLVFTVESVHAFGLGALVFAI) threads the bilayer. Residues 230 to 234 (MPRGM) lie on the Extracellular side of the membrane. A helical membrane pass occupies residues 235-255 (VITMLQLGNSLCLIPSLLLPL). Over 256–261 (SRSRSR) the chain is Cytoplasmic. Residues 262 to 282 (WLPLLLLLDGSAILAQSSAAI) traverse the membrane as a helical segment. The Extracellular portion of the chain corresponds to 283 to 291 (WRGSIPLER). Residues 292-312 (FGFVFLCTSLISIAWWQNFVH) form a helical membrane-spanning segment. Residues 313 to 337 (PHSFLPATRFFAHYAAKLRECRSKT) are Cytoplasmic-facing. A helical transmembrane segment spans residues 338 to 358 (FVVLSPWKCLIFTFCMFQFVP). Residues 359-544 (PQIPFRELLQ…ELNQFTTAND (186 aa)) are Extracellular-facing. N-linked (GlcNAc...) asparagine glycans are attached at residues Asn385 and Asn435. The interval 432–522 (LFRNGTRRPP…DADEQEEEEE (91 aa)) is disordered. Basic and acidic residues predominate over residues 442–454 (KKEEVKKNKMDSK). The span at 455–465 (KKTKKLKKKKG) shows a compositional bias: basic residues. Positions 466 to 478 (GNNNATSTNSSEK) are enriched in low complexity. N-linked (GlcNAc...) asparagine glycosylation is found at Asn469 and Asn474. Residues 513 to 522 (DADEQEEEEE) are compositionally biased toward acidic residues. Residues 545-565 (ALWLVFVQAGSVLLCQLCAKF) form a helical membrane-spanning segment. Residues 566-573 (ACKVVMQR) lie on the Cytoplasmic side of the membrane. The helical transmembrane segment at 574–594 (VGLALPVVLSIPFGILFLAYS) threads the bilayer. Over 595 to 631 (CRQKATNPCHLSEWMSKELFWQCPTRPFHWQRFFREQ) the chain is Extracellular. The helical transmembrane segment at 632 to 652 (PNLLWLCWWLSQCWITIHLWL) threads the bilayer. Residues 653-1124 (PRQERLAKSE…VSIWYIAYQL (472 aa)) are Cytoplasmic-facing. The disordered stretch occupies residues 693 to 718 (SEDIDTEEEANEGGGEQEDGNSSTHT). A compositionally biased stretch (acidic residues) spans 696–711 (IDTEEEANEGGGEQED). A helical membrane pass occupies residues 1125-1145 (VMLFSSVLGPGTIFLMIVGAI). Topologically, residues 1146-1154 (SISFNIDTR) are extracellular. Residues 1155–1175 (LALLIVTTPVLCFCVCCLTCG) form a helical membrane-spanning segment. At 1176–1179 (TETQ) the chain is on the cytoplasmic side. Residues 1180-1200 (LLLAQVIGALFAMLMTAVIVG) traverse the membrane as a helical segment. Over 1201-1209 (TSLQIQKDG) the chain is Extracellular. A helical membrane pass occupies residues 1210 to 1230 (LLSPHSIFLFTVLGSWSFSAL). Residues 1231–1235 (LHPLE) are Cytoplasmic-facing. Residues 1236 to 1256 (FGCLLPCGLYFLAIPCMYMLL) form a helical membrane-spanning segment. The Extracellular portion of the chain corresponds to 1257-1461 (PVYSLCNLNT…QRGLNELRNT (205 aa)). Asn1274 carries N-linked (GlcNAc...) asparagine glycosylation. Residues 1329–1383 (CADETVEVRKLDENFRKIERKLQSLERRTNGQGNNAEEEGKEEEETGKSEQERKE) are a coiled coil. The interval 1350-1402 (LQSLERRTNGQGNNAEEEGKEEEETGKSEQERKEGREEGKEEEGKMSKRKKEE) is disordered. Over residues 1364-1373 (AEEEGKEEEE) the composition is skewed to acidic residues. A compositionally biased stretch (basic and acidic residues) spans 1374–1402 (TGKSEQERKEGREEGKEEEGKMSKRKKEE). A helical transmembrane segment spans residues 1462–1482 (CCSAFFMVNIVFIIVVLVLQL). Residues 1483-1527 (QKDCLHIEWPLGPLVNQTRVQCGGGGGRDFEGEEWIMSRLQLEPM) are Cytoplasmic-facing. A helical transmembrane segment spans residues 1528–1548 (GFVFIVFFLIILFIQFLAMLF). Topologically, residues 1549–1851 (HRFGTFTHII…FLGTTNKRAK (303 aa)) are extracellular. Residues 1626-1658 (GKRQQNAQIPPRCEKGGNERGEESPTSLPAPPV) form a disordered region. The segment covering 1637–1648 (RCEKGGNERGEE) has biased composition (basic and acidic residues). N-linked (GlcNAc...) asparagine glycosylation is present at Asn1660. The segment at 1765–1851 (HSIFPSSSES…FLGTTNKRAK (87 aa)) is disordered. Basic and acidic residues predominate over residues 1781 to 1822 (GGGRGRGREQERDKCLEGKKEKFRQRVEEGPARCHRLEELFG). A compositionally biased stretch (basic residues) spans 1823–1834 (KSRKGGPQKRGK).

This sequence belongs to the chitin synthase family. Class IV subfamily. May require proteolytic cleavage for activation.

Its subcellular location is the cell membrane. It carries out the reaction [(1-&gt;4)-N-acetyl-beta-D-glucosaminyl](n) + UDP-N-acetyl-alpha-D-glucosamine = [(1-&gt;4)-N-acetyl-beta-D-glucosaminyl](n+1) + UDP + H(+). Its function is as follows. Required for the synthesis of chitin. In Meloidogyne artiellia (British root-knot nematode), this protein is Chitin synthase.